Consider the following 92-residue polypeptide: Putative phosphotransferase enzyme IIB component SgcB (92 aa).

In terms of domain architecture, PTS EIIB type-2 spans 1–92; that stretch reads MKKILVACGT…KQQIKALLTQ (92 aa). C8 serves as the catalytic Phosphocysteine intermediate.

The protein localises to the cytoplasm. Functionally, the phosphoenolpyruvate-dependent sugar phosphotransferase system (sugar PTS), a major carbohydrate active -transport system, catalyzes the phosphorylation of incoming sugar substrates concomitantly with their translocation across the cell membrane. The sequence is that of Putative phosphotransferase enzyme IIB component SgcB (sgcB) from Escherichia coli (strain K12).